The primary structure comprises 544 residues: Membrane protein insertase YidC (544 aa).

6 helical membrane-spanning segments follow: residues 13–33, 321–341, 343–363, 409–429, 461–481, and 506–526; these read LSLFLIGLFMLINDIFSSWML, LWYLIQVPMQMVMQVFYDVIP, WGLSIIFLTIVVRILIFPLTF, LGGCFPIILQLPIFFALYSLV, LYFVSWTDIRILPFIMMFTQL, and MPIMFFFILYNMPSGLLIYWI.

It belongs to the OXA1/ALB3/YidC family. Type 1 subfamily. In terms of assembly, interacts with the Sec translocase complex via SecD. Specifically interacts with transmembrane segments of nascent integral membrane proteins during membrane integration.

The protein resides in the cell inner membrane. In terms of biological role, required for the insertion and/or proper folding and/or complex formation of integral membrane proteins into the membrane. Involved in integration of membrane proteins that insert both dependently and independently of the Sec translocase complex, as well as at least some lipoproteins. Aids folding of multispanning membrane proteins. This chain is Membrane protein insertase YidC, found in Borreliella afzelii (strain PKo) (Borrelia afzelii).